The chain runs to 120 residues: Prefoldin subunit beta (120 aa).

Belongs to the prefoldin subunit beta family. As to quaternary structure, heterohexamer of two alpha and four beta subunits.

The protein localises to the cytoplasm. Molecular chaperone capable of stabilizing a range of proteins. Seems to fulfill an ATP-independent, HSP70-like function in archaeal de novo protein folding. The polypeptide is Prefoldin subunit beta (Methanothrix thermoacetophila (strain DSM 6194 / JCM 14653 / NBRC 101360 / PT) (Methanosaeta thermophila)).